A 1957-amino-acid polypeptide reads, in one-letter code: Sporulation-specific protein 15 (1957 aa).

Low complexity-rich tracts occupy residues 1-12 and 19-28; these read MSNQSSSGSNTS and ASSLVSSAAS. The tract at residues 1–102 is disordered; the sequence is MSNQSSSGSN…STASSALPLT (102 aa). The span at 58-83 shows a compositional bias: basic and acidic residues; sequence SQHEDSSEELKRQEVRGMRRHSDLSI. Residues 90–102 are compositionally biased toward polar residues; it reads SEGSTASSALPLT. S105 carries the post-translational modification Phosphoserine. 4 coiled-coil regions span residues 199–785, 804–1235, 1320–1471, and 1481–1723; these read KQSE…FTSL, VNMQ…DLLD, KVVA…SLDD, and EKLG…EQHE.

Belongs to the MPC70 family. In terms of assembly, monomer.

Its subcellular location is the cytoplasm. It is found in the cytoskeleton. The protein localises to the microtubule organizing center. It localises to the spindle pole body. Has a role in the initiation of spore membrane formation. This is Sporulation-specific protein 15 (spo15) from Schizosaccharomyces pombe (strain 972 / ATCC 24843) (Fission yeast).